Consider the following 72-residue polypeptide: Aurein-2.5 (72 aa).

Residues 1-22 (MAFLKKSLFLVLFLGLVSLSIC) form the signal peptide. Residues 23–49 (EKEKRQNEEDEDENEAANHEEGSEEKR) constitute a propeptide that is removed on maturation. The interval 27-47 (RQNEEDEDENEAANHEEGSEE) is disordered. Residues 38–47 (AANHEEGSEE) are compositionally biased toward basic and acidic residues. Leucine 65 is subject to Leucine amide. Residues 69 to 72 (NDLE) constitute a propeptide that is removed on maturation.

The protein belongs to the frog skin active peptide (FSAP) family. Aurein subfamily. In terms of assembly, may be monomeric or may oligomerize as homodimers or homotrimers in Gram-positive and Gram-negative bacteria mimetic membranes. C-terminal amidation enhances antibacterial activity. This increase may be due to stabilization of the alpha-helical structure at the membrane interface. As to expression, expressed by the skin dorsal glands.

The protein localises to the secreted. The protein resides in the target cell membrane. In terms of biological role, amphipathic alpha-helical antimicrobial peptide with moderate to potent activity against Gram-positive bacteria, Gram-negative bacteria and fungi. Also shows a weak activity against biofilm of both Gram-positive and Gram-negative bacteria. Probably acts by disturbing membrane functions with its amphipathic structure. Kills fungi via membranolytic action. Enhanced sterol levels in lipid composition membranes reduce interaction of this peptide with membranes, having a protective effect against the lytic ability of the peptide. Shows anticancer activity. The polypeptide is Aurein-2.5 (Ranoidea aurea (Green and golden bell frog)).